A 420-amino-acid polypeptide reads, in one-letter code: Glucose-1-phosphate adenylyltransferase (420 aa).

Alpha-D-glucose 1-phosphate-binding positions include Tyr-107, Gly-172, 187–188 (EK), and Ser-205.

It belongs to the bacterial/plant glucose-1-phosphate adenylyltransferase family. Homotetramer.

The catalysed reaction is alpha-D-glucose 1-phosphate + ATP + H(+) = ADP-alpha-D-glucose + diphosphate. It participates in glycan biosynthesis; glycogen biosynthesis. Its function is as follows. Involved in the biosynthesis of ADP-glucose, a building block required for the elongation reactions to produce glycogen. Catalyzes the reaction between ATP and alpha-D-glucose 1-phosphate (G1P) to produce pyrophosphate and ADP-Glc. This Rhodopseudomonas palustris (strain TIE-1) protein is Glucose-1-phosphate adenylyltransferase.